Here is a 326-residue protein sequence, read N- to C-terminus: Protein farnesyltransferase/geranylgeranyltransferase type-1 subunit alpha (326 aa).

PFTA repeat units follow at residues 55-89 (RSPRALRLTEETLLLNSGNYTVWHFRRLVLEALNH), 90-124 (DLFEELEFIERIAEDNSKNYQLWHHRRWVAEKLGP), 126-160 (VAGRELEFTRRVLSLDAKHYHAWSHRQWTLRALGG), 161-194 (WEDELDYCHELLEADVFNNSAWNQRYYVITQSPL), and 201-235 (MRESEVSYTIKAILTNPANESSWRYLKALYKDDKE).

It belongs to the protein prenyltransferase subunit alpha family. As to quaternary structure, heterodimer of an alpha and a beta subunit. The cofactor is Mg(2+).

It catalyses the reaction L-cysteinyl-[protein] + (2E,6E)-farnesyl diphosphate = S-(2E,6E)-farnesyl-L-cysteinyl-[protein] + diphosphate. The catalysed reaction is geranylgeranyl diphosphate + L-cysteinyl-[protein] = S-geranylgeranyl-L-cysteinyl-[protein] + diphosphate. Essential subunit of both the farnesyltransferase and the geranylgeranyltransferase complex. Contributes to the transfer of a farnesyl or geranylgeranyl moiety from farnesyl or geranylgeranyl diphosphate to a cysteine at the fourth position from the C-terminus of several proteins having the C-terminal sequence Cys-aliphatic-aliphatic-X. The protein is Protein farnesyltransferase/geranylgeranyltransferase type-1 subunit alpha (FTA) of Arabidopsis thaliana (Mouse-ear cress).